A 241-amino-acid chain; its full sequence is Large ribosomal subunit protein uL2 (241 aa).

Positions 200-241 are disordered; it reads AVDHPHGGGNRQHPGRPTTISRHAPAGRKVGSIAAKRTGKRR.

Belongs to the universal ribosomal protein uL2 family. As to quaternary structure, part of the 50S ribosomal subunit. Forms a bridge to the 30S subunit in the 70S ribosome.

Functionally, one of the primary rRNA binding proteins. Required for association of the 30S and 50S subunits to form the 70S ribosome, for tRNA binding and peptide bond formation. It has been suggested to have peptidyltransferase activity; this is somewhat controversial. Makes several contacts with the 16S rRNA in the 70S ribosome. The chain is Large ribosomal subunit protein uL2 from Methanosphaera stadtmanae (strain ATCC 43021 / DSM 3091 / JCM 11832 / MCB-3).